The primary structure comprises 206 residues: Probable GTP-binding protein EngB (206 aa).

The region spanning 8 to 195 (RSDEVVLVGR…EDAVNSHFDA (188 aa)) is the EngB-type G domain. Residues 16-23 (GRSNVGKS), 41-45 (GVTRQ), 60-63 (DLPG), 140-143 (NKMD), and 175-177 (ITA) contribute to the GTP site. 2 residues coordinate Mg(2+): S23 and T43.

Belongs to the TRAFAC class TrmE-Era-EngA-EngB-Septin-like GTPase superfamily. EngB GTPase family. It depends on Mg(2+) as a cofactor.

In terms of biological role, necessary for normal cell division and for the maintenance of normal septation. The protein is Probable GTP-binding protein EngB of Halobacterium salinarum (strain ATCC 29341 / DSM 671 / R1).